The chain runs to 178 residues: Translation initiation factor IF-3 (178 aa).

A disordered region spans residues 1–20 (MRRPFKAAAPTKDGPRSNRD).

This sequence belongs to the IF-3 family. Monomer.

Its subcellular location is the cytoplasm. In terms of biological role, IF-3 binds to the 30S ribosomal subunit and shifts the equilibrium between 70S ribosomes and their 50S and 30S subunits in favor of the free subunits, thus enhancing the availability of 30S subunits on which protein synthesis initiation begins. The chain is Translation initiation factor IF-3 from Mesorhizobium japonicum (strain LMG 29417 / CECT 9101 / MAFF 303099) (Mesorhizobium loti (strain MAFF 303099)).